We begin with the raw amino-acid sequence, 121 residues long: Small ribosomal subunit protein bS6 (121 aa).

Residues 94-121 form a disordered region; the sequence is KAETGPSAVMKRVEKEEARKSSQQETAA. Residues 104 to 115 are compositionally biased toward basic and acidic residues; it reads KRVEKEEARKSS.

It belongs to the bacterial ribosomal protein bS6 family.

Its function is as follows. Binds together with bS18 to 16S ribosomal RNA. The sequence is that of Small ribosomal subunit protein bS6 from Leptothrix cholodnii (strain ATCC 51168 / LMG 8142 / SP-6) (Leptothrix discophora (strain SP-6)).